We begin with the raw amino-acid sequence, 119 residues long: Large ribosomal subunit protein uL22 (119 aa).

The protein belongs to the universal ribosomal protein uL22 family. As to quaternary structure, part of the 50S ribosomal subunit.

Its function is as follows. This protein binds specifically to 23S rRNA; its binding is stimulated by other ribosomal proteins, e.g. L4, L17, and L20. It is important during the early stages of 50S assembly. It makes multiple contacts with different domains of the 23S rRNA in the assembled 50S subunit and ribosome. In terms of biological role, the globular domain of the protein is located near the polypeptide exit tunnel on the outside of the subunit, while an extended beta-hairpin is found that lines the wall of the exit tunnel in the center of the 70S ribosome. This Rickettsia canadensis (strain McKiel) protein is Large ribosomal subunit protein uL22.